A 513-amino-acid polypeptide reads, in one-letter code: uncharacterized protein (513 aa).

Residues 1-16 show a composition bias toward basic and acidic residues; it reads MPREHDSKYHRERDMR. Residues 1–21 form a disordered region; it reads MPREHDSKYHRERDMRSGLQE.

This is an uncharacterized protein from Sinorhizobium fredii (strain NBRC 101917 / NGR234).